A 722-amino-acid chain; its full sequence is Ras and EF-hand domain-containing protein (722 aa).

EF-hand domains follow at residues 5-39 and 39-74; these read DELS…ELKV and VSPS…ARGL. The segment covering 75–84 has biased composition (basic and acidic residues); sequence HMPEGKKDVE. The disordered stretch occupies residues 75-109; sequence HMPEGKKDVEQGEPPKSPSTPDKEEKPEETSSPAW. A coiled-coil region spans residues 156 to 335; the sequence is REIRLQSTEM…ANRKLHDSND (180 aa). Polar residues predominate over residues 355-374; the sequence is INTSPGSTISRNSPKLTRCT. Disordered regions lie at residues 355–384 and 439–491; these read INTS…PRSS and FHRS…SGAS. Over residues 480–491 the composition is skewed to low complexity; that stretch reads SNPVSRSSSGAS. GTP contacts are provided by residues 532-537, 635-638, and 672-673; these read AVGKSS, NKAD, and AK.

The protein belongs to the small GTPase superfamily. Rab family. In terms of assembly, homodimer.

The protein resides in the cytoplasm. It localises to the perinuclear region. Functionally, binds predominantly GDP, and also GTP. This is Ras and EF-hand domain-containing protein (rasef) from Xenopus tropicalis (Western clawed frog).